A 169-amino-acid polypeptide reads, in one-letter code: Probable phospholipid hydroperoxide glutathione peroxidase (169 aa).

Cysteine 43 is a catalytic residue.

Belongs to the glutathione peroxidase family.

It is found in the cytoplasm. The catalysed reaction is a hydroperoxy polyunsaturated fatty acid + 2 glutathione = a hydroxy polyunsaturated fatty acid + glutathione disulfide + H2O. Its function is as follows. Protects cells and enzymes from oxidative damage, by catalyzing the reduction of hydrogen peroxide, lipid peroxides and organic hydroperoxide, by glutathione. The polypeptide is Probable phospholipid hydroperoxide glutathione peroxidase (Nicotiana tabacum (Common tobacco)).